Reading from the N-terminus, the 388-residue chain is Alanine racemase (388 aa).

The Proton acceptor; specific for D-alanine role is filled by lysine 44. Lysine 44 carries the N6-(pyridoxal phosphate)lysine modification. Arginine 142 is a binding site for substrate. The active-site Proton acceptor; specific for L-alanine is tyrosine 273. Residue methionine 321 coordinates substrate.

The protein belongs to the alanine racemase family. Requires pyridoxal 5'-phosphate as cofactor.

The enzyme catalyses L-alanine = D-alanine. It participates in amino-acid biosynthesis; D-alanine biosynthesis; D-alanine from L-alanine: step 1/1. Catalyzes the interconversion of L-alanine and D-alanine. May also act on other amino acids. This is Alanine racemase (alr) from Mycobacterium ulcerans (strain Agy99).